We begin with the raw amino-acid sequence, 112 residues long: VDVPADGAKIDFIAGGEKNLTVVFNHSTHKDVKCDDCHHDPGDKQYAGCTTDGCHNILDKADKSVNSWYKVVHDAKGGAKPTCISCHKDKAGDDKELKKKLTGCKGSACHPS.

Residues His26, His29, Cys34, Cys37, His38, His39, Cys49, Cys54, His55, His73, Cys83, Cys86, His87, Cys104, Cys109, and His110 each contribute to the heme c site.

It depends on heme as a cofactor.

Functionally, participates in sulfate respiration coupled with phosphorylation by transferring electrons from the enzyme dehydrogenase to ferredoxin. This is Cytochrome c3 from Megalodesulfovibrio gigas (strain ATCC 19364 / DSM 1382 / NCIMB 9332 / VKM B-1759) (Desulfovibrio gigas).